A 107-amino-acid chain; its full sequence is Prostate collagen triple helix protein (107 aa).

A disordered region spans residues 47–107; that stretch reads PLIPRTPGSP…PTSPLFPFCP (61 aa). Low complexity predominate over residues 81 to 100; sequence VGPKGPMLPLGPSGPVGPTS.

As to expression, expressed in prostate and testis. Weakly or not expressed in other tissues. Overexpressed in prostate cancers.

Its subcellular location is the cytoplasm. Functionally, may be involved in growth and survival of prostate cancer cells through the TAF-Ibeta pathway. In Homo sapiens (Human), this protein is Prostate collagen triple helix protein (PCOTH).